The chain runs to 477 residues: D-alanyl-D-alanine carboxypeptidase DacB (477 aa).

The first 20 residues, 1–20, serve as a signal peptide directing secretion; sequence MRFSRFIIGLTSCIAFSVQA. Residue serine 62 is the Acyl-ester intermediate of the active site. Lysine 65 serves as the catalytic Proton acceptor. The interval 90–263 is absent in class-A beta-lactamases; that stretch reads GNVENGVLKG…YAGAILKDEL (174 aa). Residue serine 306 is part of the active site. A substrate-binding site is contributed by lysine 417.

The protein belongs to the peptidase S13 family.

The protein localises to the periplasm. The enzyme catalyses Preferential cleavage: (Ac)2-L-Lys-D-Ala-|-D-Ala. Also transpeptidation of peptidyl-alanyl moieties that are N-acyl substituents of D-alanine.. Its pathway is cell wall biogenesis; peptidoglycan biosynthesis. In terms of biological role, not involved in transpeptidation but exclusively catalyzes a DD-carboxypeptidase and DD-endopeptidase reaction. This chain is D-alanyl-D-alanine carboxypeptidase DacB (dacB), found in Escherichia coli (strain K12).